The following is a 93-amino-acid chain: Photosystem I iron-sulfur center (93 aa).

4Fe-4S ferredoxin-type domains lie at Lys13–Ser43 and Gln50–Tyr80. The [4Fe-4S] cluster site is built by Cys23, Cys26, Cys29, Cys33, Cys60, Cys63, Cys66, and Cys70.

The eukaryotic PSI reaction center is composed of at least 11 subunits. [4Fe-4S] cluster is required as a cofactor.

The protein resides in the plastid. It is found in the chloroplast thylakoid membrane. It catalyses the reaction reduced [plastocyanin] + hnu + oxidized [2Fe-2S]-[ferredoxin] = oxidized [plastocyanin] + reduced [2Fe-2S]-[ferredoxin]. Apoprotein for the two 4Fe-4S centers FA and FB of photosystem I (PSI); essential for photochemical activity. FB is the terminal electron acceptor of PSI, donating electrons to ferredoxin. The C-terminus interacts with PsaA/B/D and helps assemble the protein into the PSI complex. Required for binding of PsaD and PsaE to PSI. PSI is a plastocyanin-ferredoxin oxidoreductase, converting photonic excitation into a charge separation, which transfers an electron from the donor P700 chlorophyll pair to the spectroscopically characterized acceptors A0, A1, FX, FA and FB in turn. The sequence is that of Photosystem I iron-sulfur center from Bigelowiella natans (Pedinomonas minutissima).